An 851-amino-acid chain; its full sequence is DNA mismatch repair protein MutS (851 aa).

ATP is bound at residue 602–609 (GPNMSGKS).

This sequence belongs to the DNA mismatch repair MutS family.

In terms of biological role, this protein is involved in the repair of mismatches in DNA. It is possible that it carries out the mismatch recognition step. This protein has a weak ATPase activity. This chain is DNA mismatch repair protein MutS, found in Streptococcus pyogenes serotype M6 (strain ATCC BAA-946 / MGAS10394).